The primary structure comprises 97 residues: Large ribosomal subunit protein uL23 (97 aa).

The protein belongs to the universal ribosomal protein uL23 family. As to quaternary structure, part of the 50S ribosomal subunit. Contacts protein L29, and trigger factor when it is bound to the ribosome.

One of the early assembly proteins it binds 23S rRNA. One of the proteins that surrounds the polypeptide exit tunnel on the outside of the ribosome. Forms the main docking site for trigger factor binding to the ribosome. The sequence is that of Large ribosomal subunit protein uL23 from Rhizobium rhizogenes (strain K84 / ATCC BAA-868) (Agrobacterium radiobacter).